Reading from the N-terminus, the 257-residue chain is GTP cyclohydrolase FolE2 (257 aa).

It belongs to the GTP cyclohydrolase IV family.

The enzyme catalyses GTP + H2O = 7,8-dihydroneopterin 3'-triphosphate + formate + H(+). It functions in the pathway cofactor biosynthesis; 7,8-dihydroneopterin triphosphate biosynthesis; 7,8-dihydroneopterin triphosphate from GTP: step 1/1. Its function is as follows. Converts GTP to 7,8-dihydroneopterin triphosphate. This Dictyoglomus thermophilum (strain ATCC 35947 / DSM 3960 / H-6-12) protein is GTP cyclohydrolase FolE2.